The chain runs to 416 residues: Carboxypeptidase B (416 aa).

Positions 1–15 (MAFLILVTLALASAH) are cleaved as a signal peptide. Positions 16-109 (YSGEHFEGEK…LEGQFGRQVP (94 aa)) are cleaved as a propeptide — activation peptide. The region spanning 117 to 411 (KYNRWETIEA…LAIKHLARYV (295 aa)) is the Peptidase M14 domain. Positions 175 and 178 each coordinate Zn(2+). Substrate is bound by residues 175–178 (HARE), Arg-233, and 250–251 (TR). Cystine bridges form between Cys-244-Cys-267 and Cys-258-Cys-272. Position 303 (His-303) interacts with Zn(2+). Substrate is bound by residues 304–305 (SY) and Tyr-355. The active-site Proton donor/acceptor is the Glu-377.

The protein belongs to the peptidase M14 family. The cofactor is Zn(2+).

The protein resides in the secreted. It localises to the zymogen granule lumen. The catalysed reaction is Preferential release of a C-terminal lysine or arginine amino acid.. The protein is Carboxypeptidase B (CPB1) of Canis lupus familiaris (Dog).